A 735-amino-acid chain; its full sequence is Transcription factor RFX4 (735 aa).

Residues 25-59 (SESKRFSSHSSIGNISNDENEEKENNRASKPHSTP) are disordered. A DNA-binding region spans residues 44 to 126 (NEEKENNRAS…RRLGTRGQSK (83 aa)). A DNA-binding region (RFX-type winged-helix) is located at residues 61-136 (TLQWLEENYE…YHYYGIAVKE (76 aa)). Residues 315-487 (RFSQILKRQT…NELMRAMKGE (173 aa)) form a necessary for dimerization region.

It belongs to the RFX family.

The protein resides in the nucleus. In terms of biological role, may activate transcription by interacting directly with the X-box. The polypeptide is Transcription factor RFX4 (rfx4) (Danio rerio (Zebrafish)).